A 103-amino-acid chain; its full sequence is uncharacterized protein (103 aa).

The span at 1–10 shows a compositional bias: basic residues; sequence MVVKKSKPKN. Disordered stretches follow at residues 1 to 38 and 77 to 103; these read MVVK…KGKK and AVFS…NEKK.

This is an uncharacterized protein from Schizosaccharomyces pombe (strain 972 / ATCC 24843) (Fission yeast).